Consider the following 205-residue polypeptide: Holliday junction resolvase RecU (205 aa).

Residues 1 to 26 are disordered; the sequence is MIRYPNGKSYQPIQPIGTKKRISGES. Mg(2+) contacts are provided by Thr86, Asp88, Glu101, and Gln120.

The protein belongs to the RecU family. It depends on Mg(2+) as a cofactor.

The protein resides in the cytoplasm. It carries out the reaction Endonucleolytic cleavage at a junction such as a reciprocal single-stranded crossover between two homologous DNA duplexes (Holliday junction).. In terms of biological role, endonuclease that resolves Holliday junction intermediates in genetic recombination. Cleaves mobile four-strand junctions by introducing symmetrical nicks in paired strands. Promotes annealing of linear ssDNA with homologous dsDNA. Required for DNA repair, homologous recombination and chromosome segregation. The protein is Holliday junction resolvase RecU of Bacillus pumilus (strain SAFR-032).